A 125-amino-acid chain; its full sequence is Alpha-endosulfine (125 aa).

Over residues 1 to 37 (MSDKYIGDSHLEETGEEKQDSQEKEAVTPEKAEEQKL) the composition is skewed to basic and acidic residues. Positions 1–53 (MSDKYIGDSHLEETGEEKQDSQEKEAVTPEKAEEQKLKAKYPNLGQKPGGSDF) are disordered. T28 carries the phosphothreonine; by CDK2 modification. Residue S67 is modified to Phosphoserine; by GWL. A disordered region spans residues 81–108 (QLPCAGPDKNLVTGDHIPTPQDLPQRKS). T99 bears the Phosphothreonine; by CDK2 mark. S109 is subject to Phosphoserine; by PKA.

Belongs to the endosulfine family. Phosphorylation at Ser-67 by gwl during mitosis is essential for interaction with ppp2r2d (PR55-delta) and subsequent inactivation of PP2A.

The protein resides in the cytoplasm. Protein phosphatase inhibitor that specifically inhibits protein phosphatase 2A (PP2A) during mitosis. When phosphorylated at Ser-67 during mitosis, specifically interacts with ppp2r2d (PR55-delta) and inhibits its activity, leading to inactivation of PP2A, an essential condition to keep cyclin-B1-CDK1 activity high during M phase. This is Alpha-endosulfine (ensa) from Xenopus tropicalis (Western clawed frog).